We begin with the raw amino-acid sequence, 142 residues long: Large ribosomal subunit protein uL11 (142 aa).

Belongs to the universal ribosomal protein uL11 family. As to quaternary structure, part of the ribosomal stalk of the 50S ribosomal subunit. Interacts with L10 and the large rRNA to form the base of the stalk. L10 forms an elongated spine to which L12 dimers bind in a sequential fashion forming a multimeric L10(L12)X complex. One or more lysine residues are methylated.

Functionally, forms part of the ribosomal stalk which helps the ribosome interact with GTP-bound translation factors. In Hydrogenovibrio crunogenus (strain DSM 25203 / XCL-2) (Thiomicrospira crunogena), this protein is Large ribosomal subunit protein uL11.